Consider the following 334-residue polypeptide: Ornithine carbamoyltransferase (334 aa).

Residues 56 to 59, glutamine 83, arginine 107, and 134 to 137 each bind carbamoyl phosphate; these read STRT and HPTQ. Residues asparagine 168, aspartate 232, and 236 to 237 contribute to the L-ornithine site; that span reads SM. Residues 274-275 and arginine 320 each bind carbamoyl phosphate; that span reads CL.

The protein belongs to the aspartate/ornithine carbamoyltransferase superfamily. OTCase family.

The protein localises to the cytoplasm. It catalyses the reaction carbamoyl phosphate + L-ornithine = L-citrulline + phosphate + H(+). The protein operates within amino-acid biosynthesis; L-arginine biosynthesis; L-arginine from L-ornithine and carbamoyl phosphate: step 1/3. Its function is as follows. Reversibly catalyzes the transfer of the carbamoyl group from carbamoyl phosphate (CP) to the N(epsilon) atom of ornithine (ORN) to produce L-citrulline. This is Ornithine carbamoyltransferase from Shigella dysenteriae serotype 1 (strain Sd197).